Here is an 86-residue protein sequence, read N- to C-terminus: Insulin (86 aa).

3 disulfides stabilise this stretch: cysteine 7-cysteine 72, cysteine 19-cysteine 85, and cysteine 71-cysteine 76. Residues 33–63 (EAEDPQVGEVELGGGPGLGGLQPLALAGPQQ) constitute a propeptide, c peptide.

It belongs to the insulin family. Heterodimer of a B chain and an A chain linked by two disulfide bonds.

The protein localises to the secreted. In terms of biological role, insulin decreases blood glucose concentration. It increases cell permeability to monosaccharides, amino acids and fatty acids. It accelerates glycolysis, the pentose phosphate cycle, and glycogen synthesis in liver. The polypeptide is Insulin (INS) (Equus caballus (Horse)).